Consider the following 250-residue polypeptide: DNA repair protein RecO (250 aa).

It belongs to the RecO family.

Its function is as follows. Involved in DNA repair and RecF pathway recombination. The protein is DNA repair protein RecO of Staphylococcus aureus (strain MW2).